The primary structure comprises 31 residues: Morintide mO3 (31 aa).

The region spanning 1–30 (NRLCCSQYGFCGTTSEYCSRANGCQSNCWG) is the Chitin-binding type-1 domain. 2 disulfide bridges follow: Cys-4–Cys-18 and Cys-24–Cys-28.

Seeds (at protein level).

In terms of biological role, chitin-binding protein which functions in defense against chitin-containing fungal pathogens. The protein is Morintide mO3 of Moringa oleifera (Horseradish tree).